A 206-amino-acid polypeptide reads, in one-letter code: 2,3-bisphosphoglycerate-dependent phosphoglycerate mutase (206 aa).

Substrate contacts are provided by residues 9-16, 22-23, Arg-61, 88-91, Lys-99, 115-116, and 159-160; these read RHGQSEWN, TG, ERDY, RR, and GN. His-10 (tele-phosphohistidine intermediate) is an active-site residue. Glu-88 functions as the Proton donor/acceptor in the catalytic mechanism.

This sequence belongs to the phosphoglycerate mutase family. BPG-dependent PGAM subfamily. Homodimer.

It catalyses the reaction (2R)-2-phosphoglycerate = (2R)-3-phosphoglycerate. It functions in the pathway carbohydrate degradation; glycolysis; pyruvate from D-glyceraldehyde 3-phosphate: step 3/5. In terms of biological role, catalyzes the interconversion of 2-phosphoglycerate and 3-phosphoglycerate. The polypeptide is 2,3-bisphosphoglycerate-dependent phosphoglycerate mutase (Bartonella quintana (strain Toulouse) (Rochalimaea quintana)).